The sequence spans 313 residues: Cytochrome f (313 aa).

An N-terminal signal peptide occupies residues 1–30 (MRNWSFSKAALTVSLLALSWSPFGPAEVQA). Heme-binding residues include Tyr31, Cys51, Cys54, and His55. The helical transmembrane segment at 279-298 (VQGLIIFFAFVLIAQVFLVL) threads the bilayer.

Belongs to the cytochrome f family. As to quaternary structure, the 4 large subunits of the cytochrome b6-f complex are cytochrome b6, subunit IV (17 kDa polypeptide, petD), cytochrome f and the Rieske protein, while the 4 small subunits are PetG, PetL, PetM and PetN. The complex functions as a dimer. Heme serves as cofactor.

The protein localises to the plastid. Its subcellular location is the chloroplast thylakoid membrane. Component of the cytochrome b6-f complex, which mediates electron transfer between photosystem II (PSII) and photosystem I (PSI), cyclic electron flow around PSI, and state transitions. The protein is Cytochrome f of Nephroselmis olivacea (Green alga).